We begin with the raw amino-acid sequence, 269 residues long: uncharacterized protein (269 aa).

The segment covering 1–16 has biased composition (pro residues); that stretch reads MTDVPSKPPQTTPPPK. Disordered stretches follow at residues 1-110 and 157-269; these read MTDV…TISG and ILQQ…PTIQ. The segment covering 21–45 has biased composition (polar residues); it reads APTTIFSSPPQLPDRSSLNISHTAS. Positions 46–58 are enriched in low complexity; it reads TPTLTPTPLQQQQ. Residues 80-93 are compositionally biased toward polar residues; sequence SFSNSPNRQTQSFI. Over residues 159–181 the composition is skewed to low complexity; sequence QQPQQSHSPQQQQQQHTPNHQQP. Positions 182 to 195 are enriched in polar residues; sequence LSPQQQKDLAQKRS. A compositionally biased stretch (pro residues) spans 198–213; the sequence is PLPPRPNKNRPLPTPI.

This is an uncharacterized protein from Dictyostelium discoideum (Social amoeba).